Here is a 110-residue protein sequence, read N- to C-terminus: Defensin-like protein 296 (110 aa).

A signal peptide spans 1–28 (MASKITIFFVLALVVVCTMMVCIPTATA). 6 disulfides stabilise this stretch: Cys34-Cys52, Cys40-Cys57, Cys45-Cys59, Cys81-Cys102, Cys87-Cys107, and Cys95-Cys109.

This sequence belongs to the DEFL family.

Its subcellular location is the secreted. In Arabidopsis thaliana (Mouse-ear cress), this protein is Defensin-like protein 296.